Consider the following 362-residue polypeptide: tRNA N6-adenosine threonylcarbamoyltransferase (362 aa).

Positions 116 and 120 each coordinate Fe cation. Residues 138 to 142, D171, G184, and N284 contribute to the substrate site; that span reads LVSGG. D312 contributes to the Fe cation binding site.

The protein belongs to the KAE1 / TsaD family. Fe(2+) serves as cofactor.

It localises to the cytoplasm. It carries out the reaction L-threonylcarbamoyladenylate + adenosine(37) in tRNA = N(6)-L-threonylcarbamoyladenosine(37) in tRNA + AMP + H(+). Required for the formation of a threonylcarbamoyl group on adenosine at position 37 (t(6)A37) in tRNAs that read codons beginning with adenine. Is involved in the transfer of the threonylcarbamoyl moiety of threonylcarbamoyl-AMP (TC-AMP) to the N6 group of A37, together with TsaE and TsaB. TsaD likely plays a direct catalytic role in this reaction. The chain is tRNA N6-adenosine threonylcarbamoyltransferase from Chelativorans sp. (strain BNC1).